A 337-amino-acid chain; its full sequence is UPF0284 protein AF_0276 (337 aa).

It belongs to the UPF0284 family.

The polypeptide is UPF0284 protein AF_0276 (Archaeoglobus fulgidus (strain ATCC 49558 / DSM 4304 / JCM 9628 / NBRC 100126 / VC-16)).